Reading from the N-terminus, the 402-residue chain is 1-deoxy-D-xylulose 5-phosphate reductoisomerase (402 aa).

Residues threonine 13, glycine 14, serine 15, isoleucine 16, and asparagine 126 each coordinate NADPH. Position 127 (lysine 127) interacts with 1-deoxy-D-xylulose 5-phosphate. Glutamate 128 provides a ligand contact to NADPH. Residue aspartate 152 coordinates Mn(2+). 1-deoxy-D-xylulose 5-phosphate-binding residues include serine 153, glutamate 154, serine 188, and histidine 211. A Mn(2+)-binding site is contributed by glutamate 154. Residue glycine 217 participates in NADPH binding. Serine 224, asparagine 229, lysine 230, and glutamate 233 together coordinate 1-deoxy-D-xylulose 5-phosphate. Residue glutamate 233 coordinates Mn(2+).

The protein belongs to the DXR family. Requires Mg(2+) as cofactor. The cofactor is Mn(2+).

It carries out the reaction 2-C-methyl-D-erythritol 4-phosphate + NADP(+) = 1-deoxy-D-xylulose 5-phosphate + NADPH + H(+). It functions in the pathway isoprenoid biosynthesis; isopentenyl diphosphate biosynthesis via DXP pathway; isopentenyl diphosphate from 1-deoxy-D-xylulose 5-phosphate: step 1/6. Functionally, catalyzes the NADPH-dependent rearrangement and reduction of 1-deoxy-D-xylulose-5-phosphate (DXP) to 2-C-methyl-D-erythritol 4-phosphate (MEP). The sequence is that of 1-deoxy-D-xylulose 5-phosphate reductoisomerase from Psychrobacter cryohalolentis (strain ATCC BAA-1226 / DSM 17306 / VKM B-2378 / K5).